A 221-amino-acid chain; its full sequence is Phosphoribosylformylglycinamidine synthase subunit PurQ (221 aa).

In terms of domain architecture, Glutamine amidotransferase type-1 spans 2–221 (KTAVIQFPGS…VFESLKTVKK (220 aa)). Cys87 (nucleophile) is an active-site residue. Catalysis depends on residues His195 and Glu197.

In terms of assembly, part of the FGAM synthase complex composed of 1 PurL, 1 PurQ and 2 PurS subunits.

It is found in the cytoplasm. It catalyses the reaction N(2)-formyl-N(1)-(5-phospho-beta-D-ribosyl)glycinamide + L-glutamine + ATP + H2O = 2-formamido-N(1)-(5-O-phospho-beta-D-ribosyl)acetamidine + L-glutamate + ADP + phosphate + H(+). The enzyme catalyses L-glutamine + H2O = L-glutamate + NH4(+). The protein operates within purine metabolism; IMP biosynthesis via de novo pathway; 5-amino-1-(5-phospho-D-ribosyl)imidazole from N(2)-formyl-N(1)-(5-phospho-D-ribosyl)glycinamide: step 1/2. Its function is as follows. Part of the phosphoribosylformylglycinamidine synthase complex involved in the purines biosynthetic pathway. Catalyzes the ATP-dependent conversion of formylglycinamide ribonucleotide (FGAR) and glutamine to yield formylglycinamidine ribonucleotide (FGAM) and glutamate. The FGAM synthase complex is composed of three subunits. PurQ produces an ammonia molecule by converting glutamine to glutamate. PurL transfers the ammonia molecule to FGAR to form FGAM in an ATP-dependent manner. PurS interacts with PurQ and PurL and is thought to assist in the transfer of the ammonia molecule from PurQ to PurL. This is Phosphoribosylformylglycinamidine synthase subunit PurQ from Deinococcus radiodurans (strain ATCC 13939 / DSM 20539 / JCM 16871 / CCUG 27074 / LMG 4051 / NBRC 15346 / NCIMB 9279 / VKM B-1422 / R1).